We begin with the raw amino-acid sequence, 118 residues long: MSITSLKNQKEFELINKLGKKLHERYFILVIATKLPKIFLESKYNTFLGIKVSRKLNKKAVVRNKIKRRIRHLIRIIVSDSSFKDIKFAMIIIPRKGFEEINFSHLNYELSKLILRNI.

The protein belongs to the RnpA family. As to quaternary structure, consists of a catalytic RNA component (M1 or rnpB) and a protein subunit.

It catalyses the reaction Endonucleolytic cleavage of RNA, removing 5'-extranucleotides from tRNA precursor.. Functionally, RNaseP catalyzes the removal of the 5'-leader sequence from pre-tRNA to produce the mature 5'-terminus. It can also cleave other RNA substrates such as 4.5S RNA. The protein component plays an auxiliary but essential role in vivo by binding to the 5'-leader sequence and broadening the substrate specificity of the ribozyme. This Rickettsia rickettsii (strain Iowa) protein is Ribonuclease P protein component.